Consider the following 359-residue polypeptide: Type-1 angiotensin II receptor (359 aa).

Over Met-1–Ser-25 the chain is Extracellular. Asn-4 carries an N-linked (GlcNAc...) asparagine glycan. Angiotensin II contacts are provided by Gln-15 and Asp-17. 2 disulfide bridges follow: Cys-18–Cys-274 and Cys-101–Cys-180. A helical transmembrane segment spans residues Tyr-26–Phe-55. Residues Tyr-56–Thr-61 are Cytoplasmic-facing. Residues Val-62–Ala-89 traverse the membrane as a helical segment. Over Met-90 to Asn-98 the chain is Extracellular. Residues His-99–Asp-125 traverse the membrane as a helical segment. Residues Arg-126–Thr-141 lie on the Cytoplasmic side of the membrane. The chain crosses the membrane as a helical span at residues Met-142–Ile-165. Residues His-166 to Thr-190 lie on the Extracellular side of the membrane. An angiotensin II-binding site is contributed by Arg-167. The N-linked (GlcNAc...) asparagine glycan is linked to Asn-176. Angiotensin II is bound by residues Phe-182, His-183, and Tyr-184. Residue Asn-188 is glycosylated (N-linked (GlcNAc...) asparagine). A helical membrane pass occupies residues Leu-191 to Thr-216. Residue Lys-199 coordinates angiotensin II. Residues Leu-217–Phe-239 lie on the Cytoplasmic side of the membrane. The chain crosses the membrane as a helical span at residues Arg-240–Leu-268. Over Gly-269 to Asp-278 the chain is Extracellular. The chain crosses the membrane as a helical span at residues Val-279–Phe-304. At Leu-305–Glu-359 the chain is on the cytoplasmic side. Cys-355 carries S-palmitoyl cysteine lipidation.

The protein belongs to the G-protein coupled receptor 1 family. As to quaternary structure, interacts with MAS1. Interacts with ARRB1. Interacts with FLNA (via filamin repeat 21); increases PKA-mediated phosphorylation of FLNA. Post-translationally, C-terminal Ser or Thr residues may be phosphorylated.

It localises to the cell membrane. In terms of biological role, receptor for angiotensin II, a vasoconstricting peptide, which acts as a key regulator of blood pressure and sodium retention by the kidney. The activated receptor in turn couples to G-alpha proteins G(q) (GNAQ, GNA11, GNA14 or GNA15) and thus activates phospholipase C and increases the cytosolic Ca(2+) concentrations, which in turn triggers cellular responses such as stimulation of protein kinase C. The sequence is that of Type-1 angiotensin II receptor (AGTR1) from Meriones unguiculatus (Mongolian jird).